We begin with the raw amino-acid sequence, 296 residues long: Glutamate 5-kinase (296 aa).

Residue Lys-15 participates in ATP binding. Residues Ser-55, Asp-159, and Asn-186 each contribute to the substrate site. ATP contacts are provided by residues 206–207 and 248–254; these read SD and TGGIATK.

It belongs to the glutamate 5-kinase family.

It is found in the cytoplasm. It catalyses the reaction L-glutamate + ATP = L-glutamyl 5-phosphate + ADP. Its pathway is amino-acid biosynthesis; L-proline biosynthesis; L-glutamate 5-semialdehyde from L-glutamate: step 1/2. In terms of biological role, catalyzes the transfer of a phosphate group to glutamate to form L-glutamate 5-phosphate. The polypeptide is Glutamate 5-kinase (Treponema pallidum (strain Nichols)).